A 502-amino-acid chain; its full sequence is Hexokinase-2 (502 aa).

Residues 4-24 (VAVATTVVCSVAVCAAAALIV) traverse the membrane as a helical segment. Positions 35 to 487 (ARVIEILKAF…SGVGAALLAA (453 aa)) constitute a Hexokinase domain. Residues 90 to 228 (SGDETGFFYA…GLDMLVAALV (139 aa)) are hexokinase small subdomain. ADP-binding residues include Gly104, Thr105, and Asn106. Thr194, Lys195, Asn229, and Asp230 together coordinate D-glucose. Residues 229 to 476 (NDTIGTLAGG…ESVEVILSND (248 aa)) form a hexokinase large subdomain region. Thr253 is an ADP binding site. Asn256, Glu284, and Glu315 together coordinate D-glucose. Gly441 contributes to the ADP binding site.

Belongs to the hexokinase family. Highly expressed in siliques, at intermediate levels in roots and flowers, and at lower levels in stems, rosette and cauline leaves.

The protein localises to the mitochondrion outer membrane. It catalyses the reaction a D-hexose + ATP = a D-hexose 6-phosphate + ADP + H(+). The enzyme catalyses D-fructose + ATP = D-fructose 6-phosphate + ADP + H(+). It carries out the reaction D-glucose + ATP = D-glucose 6-phosphate + ADP + H(+). The protein operates within carbohydrate metabolism; hexose metabolism. It participates in carbohydrate degradation; glycolysis; D-glyceraldehyde 3-phosphate and glycerone phosphate from D-glucose: step 1/4. Functionally, fructose and glucose phosphorylating enzyme. May be involved in the phosphorylation of glucose during the export from mitochondrion to cytosol. Acts as a sugar sensor which may regulate sugar-dependent gene repression or activation. Mediates the effects of sugar on plant growth and development independently of its catalytic activity or the sugar metabolism. May regulate the execution of program cell death in plant cells. This is Hexokinase-2 (HXK2) from Arabidopsis thaliana (Mouse-ear cress).